A 570-amino-acid chain; its full sequence is Laccase-3 (570 aa).

The N-terminal stretch at M1–A25 is a signal peptide. Plastocyanin-like domains follow at residues V33–G149 and R159–A310. N79 carries N-linked (GlcNAc...) asparagine glycosylation. Cu cation-binding residues include H83, H85, H128, and H130. Residues N188, N298, N332, N383, N393, and N433 are each glycosylated (N-linked (GlcNAc...) asparagine). A Plastocyanin-like 3 domain is found at D419–R554. Positions 471, 474, 476, 533, 534, 535, and 539 each coordinate Cu cation.

It belongs to the multicopper oxidase family. Cu cation is required as a cofactor. In terms of tissue distribution, mostly expressed in roots and siliques.

It localises to the secreted. It is found in the extracellular space. The protein resides in the apoplast. It carries out the reaction 4 hydroquinone + O2 = 4 benzosemiquinone + 2 H2O. In terms of biological role, lignin degradation and detoxification of lignin-derived products. This chain is Laccase-3 (LAC3), found in Arabidopsis thaliana (Mouse-ear cress).